The chain runs to 621 residues: TOX high mobility group box family member 4 (621 aa).

Disordered stretches follow at residues 153 to 227 (LGLS…QKPV) and 305 to 333 (LDPA…ASIE). The residue at position 176 (T176) is a Phosphothreonine. S178, S181, and S182 each carry phosphoserine. Basic and acidic residues predominate over residues 183-193 (LHEDGVEDFRR). The segment covering 208 to 218 (KQKAPKKRKKK) has biased composition (basic residues). Positions 213 to 218 (KKRKKK) match the Nuclear localization signal motif. Residues 223–291 (PQKPVSAYAL…EYLKALAAYK (69 aa)) constitute a DNA-binding region (HMG box). The span at 307–319 (PAPPSQTPSPPPM) shows a compositional bias: pro residues. The residue at position 313 (T313) is a Phosphothreonine. S315 carries the phosphoserine modification. The segment covering 320 to 333 (ATVDPASPAPASIE) has biased composition (low complexity). At R481 the chain carries Asymmetric dimethylarginine. The span at 510 to 525 (PTVESSPERPMNNSPE) shows a compositional bias: polar residues. Residues 510–529 (PTVESSPERPMNNSPEAHTV) form a disordered region. Phosphoserine occurs at positions 533, 550, 552, 560, 562, and 567.

In terms of assembly, component of the PNUTS-PP1 phosphatase complex, composed of PPP1R10/PNUTS, TOX4, WDR82 and PPP1CA or PPP1CB or PPP1CC. Interacts with PPP1R10/PNUTS. Interacts with FOXO1 and CREB1 (increased by cAMP); FOXO1 and CREB1 are required for full induction of TOX4-dependent activity and the interactions are inhibited by insulin. In terms of tissue distribution, expressed in liver (at protein level).

Its subcellular location is the nucleus. The protein localises to the chromosome. In liver, recruited to target gene promoters following treatment with dexamethasone and cAMP. Binding is decreased in presence of insulin. In terms of biological role, transcription factor that modulates cell fate reprogramming from the somatic state to the pluripotent and neuronal fate. In liver, controls the expression of hormone-regulated gluconeogenic genes such as G6PC1 and PCK1. This regulation is independent of the insulin receptor activation. Also acts as a regulatory component of protein phosphatase 1 (PP1) complexes. Component of the PNUTS-PP1 protein phosphatase complex, a PP1 complex that regulates RNA polymerase II transcription pause-release. PNUTS-PP1 also plays a role in the control of chromatin structure and cell cycle progression during the transition from mitosis into interphase. In Homo sapiens (Human), this protein is TOX high mobility group box family member 4.